Reading from the N-terminus, the 217-residue chain is Ependymin (217 aa).

An N-terminal signal peptide occupies residues 1 to 20; that stretch reads MHTVKLLCVVFSCLCAIGWA. N73 and N96 each carry an N-linked (GlcNAc...) asparagine glycan.

This sequence belongs to the ependymin family. Forms disulfide-linked dimers. In terms of processing, binds calcium through the terminal sialic acids. In terms of tissue distribution, EPDs are synthesized in the meninx and secreted in the cerebrospinal fluid.

The protein localises to the secreted. May play a role in neural plasticity. May be involved during axon regeneration. The polypeptide is Ependymin (epd) (Danio rerio (Zebrafish)).